A 330-amino-acid polypeptide reads, in one-letter code: Malate dehydrogenase (330 aa).

11-17 lines the NAD(+) pocket; that stretch reads GGAGQIA. Substrate contacts are provided by arginine 92 and arginine 98. Residues asparagine 105, glutamine 112, and 129–131 contribute to the NAD(+) site; that span reads VGN. Substrate contacts are provided by asparagine 131 and arginine 162. Catalysis depends on histidine 187, which acts as the Proton acceptor.

It belongs to the LDH/MDH superfamily. MDH type 2 family.

The enzyme catalyses (S)-malate + NAD(+) = oxaloacetate + NADH + H(+). Catalyzes the reversible oxidation of malate to oxaloacetate. The sequence is that of Malate dehydrogenase from Protochlamydia amoebophila (strain UWE25).